The chain runs to 380 residues: Dynactin subunit 2 (380 aa).

The segment at 1 to 32 is disordered; the sequence is MADPKFQNLPGIAYDQPDVYETPDDPELDTSD. The segment covering 21-32 has biased composition (acidic residues); it reads ETPDDPELDTSD. Phosphoserine occurs at positions 49, 58, and 86. Coiled-coil stretches lie at residues 100 to 135 and 353 to 377; these read VQKC…QSYD and ETFA…AAIS.

It belongs to the dynactin subunit 2 family. Subunit of dynactin, a multiprotein complex associated with dynein.

It localises to the cytoplasm. The protein localises to the cytoskeleton. The protein resides in the membrane. Functionally, modulates cytoplasmic dynein binding to an organelle, and plays a role in prometaphase chromosome alignment and spindle organization during mitosis. May play a role in synapse formation during brain development. This chain is Dynactin subunit 2, found in Drosophila melanogaster (Fruit fly).